The primary structure comprises 236 residues: Methylosome subunit pICln (236 aa).

Position 2 is an N-acetylserine (S2). Phosphoserine is present on residues S95, S143, S192, S194, S197, and S209. The segment at 134-158 is disordered; sequence LHPDPEDEDSDDYDGEEYDVEAHEQ. The span at 138-152 shows a compositional bias: acidic residues; that stretch reads PEDEDSDDYDGEEYD. T222 is modified (phosphothreonine).

The protein belongs to the pICln (TC 1.A.47) family. In terms of assembly, component of the methylosome, a 20S complex containing at least PRMT5/SKB1, WDR77/MEP50 and CLNS1A/pICln. May mediate SNRPD1 and SNRPD3 methylation. Forms a 6S pICln-Sm complex composed of CLNS1A/pICln, SNRPD1, SNRPD2, SNRPE, SNRPF and SNRPG; ring-like structure where CLNS1A/pICln mimics additional Sm proteins and which is unable to assemble into the core snRNP. Interacts with LSM10 and LSM11. Expressed in most tissues.

The protein resides in the cytoplasm. It localises to the cytosol. It is found in the nucleus. Its subcellular location is the cytoskeleton. In terms of biological role, involved in both the assembly of spliceosomal snRNPs and the methylation of Sm proteins. Chaperone that regulates the assembly of spliceosomal U1, U2, U4 and U5 small nuclear ribonucleoproteins (snRNPs), the building blocks of the spliceosome, and thereby plays an important role in the splicing of cellular pre-mRNAs. Most spliceosomal snRNPs contain a common set of Sm proteins SNRPB, SNRPD1, SNRPD2, SNRPD3, SNRPE, SNRPF and SNRPG that assemble in a heptameric protein ring on the Sm site of the small nuclear RNA to form the core snRNP (Sm core). In the cytosol, the Sm proteins SNRPD1, SNRPD2, SNRPE, SNRPF and SNRPG are trapped in an inactive 6S pICln-Sm complex by the chaperone CLNS1A that controls the assembly of the core snRNP. Dissociation by the SMN complex of CLNS1A from the trapped Sm proteins and their transfer to an SMN-Sm complex triggers the assembly of core snRNPs and their transport to the nucleus. The polypeptide is Methylosome subunit pICln (Clns1a) (Rattus norvegicus (Rat)).